The chain runs to 504 residues: Terminase, large subunit (504 aa).

Positions 1–204 (MTRGERVIAF…LSIWIDDAVK (204 aa)) are ATPase activity. A Walker A motif motif is present at residues 54 to 61 (IARKNGKT). Positions 149–154 (LAILDE) match the Walker B motif motif. The nuclease activity stretch occupies residues 326-415 (FPFFWTPQKT…LPLVEFGQGF (90 aa)). Asp471 contacts Mg(2+).

The protein belongs to the Hendrixvirinae large terminase family. As to quaternary structure, homopentamer; forms a ring-like structure through which genomic DNA is translocated into the capsid. Interacts with the terminase small subunit; the active complex is composed of a pentamer ring of terminase large subunits and a nonamer ring of terminase small subunits. Interacts with the portal protein; this interaction allows the packaging of viral DNA. The cofactor is Mg(2+). Requires Mn(2+) as cofactor.

Inhibited by zinc. The terminase large subunit acts as an ATP driven molecular motor necessary for viral DNA translocation into empty capsids and as an endonuclease that cuts the viral genome from the concetamer to initiate and to end a packaging reaction. The terminase lies at a unique vertex of the procapsid and is composed of two subunits, a small terminase subunit involved in viral DNA recognition (packaging sequence), and a large terminase subunit possessing endonucleolytic and ATPase activities. Both terminase subunits heterooligomerize and are docked on the portal protein to form the packaging machine. Packaging initiates by TerS recognizing the packaging sequence in the viral DNA. The nuclease activity of TerL cuts the viral DNA and the terminase-DNA complex binds to the portal of a procapsid shell. DNA is translocated into the capsid, powered by the packaging ATPase in TerL, which continues until the next site is encountered at which point the motor stops and again cuts the DNA to release the nucleocapsid filled with a unit-length genome ('unit length' packaging). This Escherichia coli (Bacteriophage HK97) protein is Terminase, large subunit (2).